We begin with the raw amino-acid sequence, 474 residues long: MTKKLHIKTWGCQMNEYDSSKMADLLDATHGYQLTEVAEEADVLLLNTCSIREKAQEKVFHQLGRWKLLKEKNPDLIIGVGGCVASQEGDHIRQRAHYVDIIFGPQTLHRLPEMINAVRGNRSPVVDISFPEIEKFDRLPEPRADGPTAFVSIMEGCNKYCTYCVVPYTRGEEVSRPCDDILFEIAQLAAQGVREVNLLGQNVNAWRGENYDGTTGSFADLLRLVAAIDGIDRIRFTTSHPIEFTDDIIEVYRDTPELVSFLHLPVQSGSDRVLNLMGRTHTALEYKAIIRKLREARPDIQISSDFIVGFPGETTDDFEKTMKLIADVNFDMSYSFIFSARPGTPAADMVDDVPEEDKKQRLYILQERINQQAMAWSRRMLGTVQRILVEGTSRKSLMELSGRTENNRVVNFEGTPDMVGKFVDVEIVDVYTNSLRGKIVRTEAEMGLRIAESPESVIARTRKENDLGVGIYQP.

Residues K3–G120 form the MTTase N-terminal domain. Residues C12, C49, C83, C157, C161, and C164 each contribute to the [4Fe-4S] cluster site. The Radical SAM core domain occupies R143 to A375. Residues R378 to R441 enclose the TRAM domain.

This sequence belongs to the methylthiotransferase family. MiaB subfamily. Monomer. [4Fe-4S] cluster is required as a cofactor.

It localises to the cytoplasm. It catalyses the reaction N(6)-dimethylallyladenosine(37) in tRNA + (sulfur carrier)-SH + AH2 + 2 S-adenosyl-L-methionine = 2-methylsulfanyl-N(6)-dimethylallyladenosine(37) in tRNA + (sulfur carrier)-H + 5'-deoxyadenosine + L-methionine + A + S-adenosyl-L-homocysteine + 2 H(+). Catalyzes the methylthiolation of N6-(dimethylallyl)adenosine (i(6)A), leading to the formation of 2-methylthio-N6-(dimethylallyl)adenosine (ms(2)i(6)A) at position 37 in tRNAs that read codons beginning with uridine. The protein is tRNA-2-methylthio-N(6)-dimethylallyladenosine synthase of Klebsiella pneumoniae (strain 342).